The primary structure comprises 146 residues: Cytochrome c oxidase assembly factor 1 homolog (146 aa).

Over 1–14 (MMWQKYAGSRRSMP) the chain is Mitochondrial matrix. The chain crosses the membrane as a helical span at residues 15–37 (LGARILFHGVFYAGGFAIVYYLI). Residues 38–146 (QKFHSRALYY…GENGDEVKKE (109 aa)) lie on the Mitochondrial intermembrane side of the membrane.

Belongs to the COA1 family. In terms of assembly, component of the MITRAC (mitochondrial translation regulation assembly intermediate of cytochrome c oxidase complex) complex, the core components of this complex being COA3/MITRAC12 and COX14. Interacts with COX17 and COA6. Part of the mitochondrial complex I assembly/MCIA complex that comprises at least the core subunits TMEM126B, NDUFAF1, ECSIT and ACAD9 and complement subunits such as COA1 and TMEM186.

Its subcellular location is the mitochondrion inner membrane. Component of the MITRAC (mitochondrial translation regulation assembly intermediate of cytochrome c oxidase complex) complex, that regulates cytochrome c oxidase assembly. MITRAC complexes regulate both translation of mitochondrial encoded components and assembly of nuclear-encoded components imported in mitochondrion. Required for assembly of mitochondrial respiratory chain complex I and complex IV. As part of the MCIA complex, required for efficient assembly of the mitochondrial complex I. The protein is Cytochrome c oxidase assembly factor 1 homolog of Homo sapiens (Human).